The following is a 305-amino-acid chain: Superoxide dismutase [Fe] 2, chloroplastic (305 aa).

The N-terminal 46 residues, 1 to 46 (MMNVAVTATPSSLLYSPLLLPSQGPNRRMQWKRNGKRRLGTKVAVS), are a transit peptide targeting the chloroplast. Positions 77, 129, 228, and 232 each coordinate Fe cation. The interval 270–305 (AVQREQEGTETEDEENPDDEVPEVYLDSDIDVSEVD) is disordered. A compositionally biased stretch (acidic residues) spans 277–305 (GTETEDEENPDDEVPEVYLDSDIDVSEVD).

This sequence belongs to the iron/manganese superoxide dismutase family. Heterodimer with FSD3. Interacts with MRL7 and PRDA1. Fe cation is required as a cofactor.

It localises to the plastid. It is found in the chloroplast thylakoid. The catalysed reaction is 2 superoxide + 2 H(+) = H2O2 + O2. Activated by cpn20/cpn21 (in vitro). Functionally, destroys superoxide anion radicals which are normally produced within the cells and which are toxic to biological systems. Plays important role in chloroplast development, particularly in the maintenance of thylakoids membranes. Seems to act as a heterodimer with FSD3. In Arabidopsis thaliana (Mouse-ear cress), this protein is Superoxide dismutase [Fe] 2, chloroplastic (FSD2).